The sequence spans 436 residues: Xylose isomerase (436 aa).

Active-site residues include His100 and Asp103. Residues Glu231, Glu267, His270, Asp295, Asp306, Asp308, and Asp338 each contribute to the Mg(2+) site.

This sequence belongs to the xylose isomerase family. Homotetramer. It depends on Mg(2+) as a cofactor.

It is found in the cytoplasm. The catalysed reaction is alpha-D-xylose = alpha-D-xylulofuranose. The polypeptide is Xylose isomerase (Agrobacterium fabrum (strain C58 / ATCC 33970) (Agrobacterium tumefaciens (strain C58))).